Consider the following 616-residue polypeptide: 1-deoxy-D-xylulose-5-phosphate synthase (616 aa).

Thiamine diphosphate is bound by residues His-74 and 115–117 (GHS). Residue Asp-146 coordinates Mg(2+). Thiamine diphosphate contacts are provided by residues 147–148 (GA), Asn-175, Tyr-282, and Glu-365. Asn-175 serves as a coordination point for Mg(2+).

The protein belongs to the transketolase family. DXPS subfamily. In terms of assembly, homodimer. Mg(2+) is required as a cofactor. Requires thiamine diphosphate as cofactor.

It catalyses the reaction D-glyceraldehyde 3-phosphate + pyruvate + H(+) = 1-deoxy-D-xylulose 5-phosphate + CO2. It participates in metabolic intermediate biosynthesis; 1-deoxy-D-xylulose 5-phosphate biosynthesis; 1-deoxy-D-xylulose 5-phosphate from D-glyceraldehyde 3-phosphate and pyruvate: step 1/1. Catalyzes the acyloin condensation reaction between C atoms 2 and 3 of pyruvate and glyceraldehyde 3-phosphate to yield 1-deoxy-D-xylulose-5-phosphate (DXP). This is 1-deoxy-D-xylulose-5-phosphate synthase from Chromobacterium violaceum (strain ATCC 12472 / DSM 30191 / JCM 1249 / CCUG 213 / NBRC 12614 / NCIMB 9131 / NCTC 9757 / MK).